Here is a 505-residue protein sequence, read N- to C-terminus: Cell division control protein 6 homolog B (505 aa).

The interval 37 to 72 (KRKMRSDSAAVSGNSVSTPKKLKSHLPSSVPNPGMS) is disordered. Over residues 45 to 54 (AAVSGNSVST) the composition is skewed to polar residues.

It belongs to the CDC6/cdc18 family.

The protein resides in the nucleus. May be involved in the initiation of DNA replication. The chain is Cell division control protein 6 homolog B from Arabidopsis thaliana (Mouse-ear cress).